The following is a 238-amino-acid chain: uncharacterized protein (238 aa).

The protein belongs to the HyuE racemase family.

This is an uncharacterized protein from Schizosaccharomyces pombe (strain 972 / ATCC 24843) (Fission yeast).